The following is a 127-amino-acid chain: Riboflavin kinase (127 aa).

10-15 (GLGEGK) lines the CDP pocket. Mg(2+)-binding residues include T39 and N41. T96 and E104 together coordinate FMN. 109–112 (IQLR) serves as a coordination point for CDP.

This sequence belongs to the archaeal riboflavin kinase family. Requires Mg(2+) as cofactor.

It carries out the reaction riboflavin + CTP = CDP + FMN + H(+). The protein operates within cofactor biosynthesis; FMN biosynthesis; FMN from riboflavin (CTP route): step 1/1. In terms of biological role, catalyzes the CTP-dependent phosphorylation of riboflavin (vitamin B2) to form flavin mononucleotide (FMN). The polypeptide is Riboflavin kinase (Methanococcus maripaludis (strain DSM 14266 / JCM 13030 / NBRC 101832 / S2 / LL)).